The primary structure comprises 675 residues: Zinc finger protein 526 (675 aa).

3 consecutive C2H2-type zinc fingers follow at residues 56–78 (FMCS…QEQH), 108–130 (FQCG…QDAH), and 140–163 (YQCG…KTQH). Residues 160–195 (KTQHLSSAADEPPSPLPPPTPPPPPPPPPPPPPPEV) are disordered. Positions 171–194 (PPSPLPPPTPPPPPPPPPPPPPPE) are enriched in pro residues. Residues 200 to 222 (YECPECSTLCATPEEFLEHQGTH) form a C2H2-type 4 zinc finger. Over residues 225-234 (SLEKEEHNGL) the composition is skewed to basic and acidic residues. Residues 225–283 (SLEKEEHNGLEEEEEDEEEGEEEEDDDDEETDEEEASSELTADDTGSNKSTADSAQSCG) form a disordered region. Residues 235–261 (EEEEEDEEEGEEEEDDDDEETDEEEAS) are compositionally biased toward acidic residues. The span at 269-281 (TGSNKSTADSAQS) shows a compositional bias: polar residues. 4 consecutive C2H2-type zinc fingers follow at residues 312–334 (FHCS…GRAH), 339–361 (HECT…QRLH), 367–389 (YLCV…RRAH), and 395–416 (HRCR…RRTH). Residues 415–439 (THTGKSGTPTRVATVSPAPAEPTPP) form a disordered region. The segment covering 418–427 (GKSGTPTRVA) has biased composition (polar residues). C2H2-type zinc fingers lie at residues 447 to 470 (LPCP…RAVH), 477 to 499 (HRCG…LRTH), 505 to 527 (FQCH…QLTH), 533 to 555 (YQCL…RRLH), and 578 to 600 (YYCG…QRVH). The segment at 606-625 (LTLQPPRSPSPVPPPPPEPQ) is disordered. Residues 611-624 (PRSPSPVPPPPPEP) are compositionally biased toward pro residues.

The protein belongs to the krueppel C2H2-type zinc-finger protein family.

The protein localises to the nucleus. In terms of biological role, may be involved in transcriptional regulation. This is Zinc finger protein 526 (Znf526) from Mus musculus (Mouse).